Reading from the N-terminus, the 378-residue chain is MLAPRRKTRQLMVGKVGVGSDHPISVQSMTTTKTHDINGTLQQIAQLTATGCDIVRVACPKTVDAEALPIIAKKSPIPVIADIHFQPKYIFAAIDAGCAAVRVNPGNIKEFDGRVKEVAKAAGDAGIPIRIGVNGGSLDKRILDKYHGKATPEALVESAMWEAGLFEEHGFGDIAISVKHSDPVLMVEAYRQLAEQSDYPLHLGVTEAGPKFMGTIKSSVAFGALLSQGIGDTIRVSLSADPVEEIKVGDQILQSLNLRPRKLEIVSCPSCGRAQVDVYSLAEEVTEALDGMEVPLRVAVMGCVVNGPGEARDADLGVASGNGKGQIFVKGEVIKTVPESQIVETLIEEAMRIAEEMDPEVLAAASASGMKAEVKVTK.

Residues Cys268, Cys271, Cys303, and Glu310 each contribute to the [4Fe-4S] cluster site.

It belongs to the IspG family. [4Fe-4S] cluster serves as cofactor.

The catalysed reaction is (2E)-4-hydroxy-3-methylbut-2-enyl diphosphate + oxidized [flavodoxin] + H2O + 2 H(+) = 2-C-methyl-D-erythritol 2,4-cyclic diphosphate + reduced [flavodoxin]. The protein operates within isoprenoid biosynthesis; isopentenyl diphosphate biosynthesis via DXP pathway; isopentenyl diphosphate from 1-deoxy-D-xylulose 5-phosphate: step 5/6. Converts 2C-methyl-D-erythritol 2,4-cyclodiphosphate (ME-2,4cPP) into 1-hydroxy-2-methyl-2-(E)-butenyl 4-diphosphate. This is 4-hydroxy-3-methylbut-2-en-1-yl diphosphate synthase (flavodoxin) from Corynebacterium glutamicum (strain ATCC 13032 / DSM 20300 / JCM 1318 / BCRC 11384 / CCUG 27702 / LMG 3730 / NBRC 12168 / NCIMB 10025 / NRRL B-2784 / 534).